We begin with the raw amino-acid sequence, 189 residues long: Thymidine kinase (189 aa).

Residues 9-16 (GTMNSGKT) and 85-88 (DESQ) contribute to the ATP site. E86 functions as the Proton acceptor in the catalytic mechanism. Zn(2+) is bound by residues C143, C146, C180, and H183.

Belongs to the thymidine kinase family. Homotetramer.

It is found in the cytoplasm. The enzyme catalyses thymidine + ATP = dTMP + ADP + H(+). The sequence is that of Thymidine kinase from Streptococcus pyogenes serotype M3 (strain ATCC BAA-595 / MGAS315).